Here is a 307-residue protein sequence, read N- to C-terminus: tRNA pseudouridine synthase B (307 aa).

D47 functions as the Nucleophile in the catalytic mechanism.

This sequence belongs to the pseudouridine synthase TruB family. Type 1 subfamily.

It carries out the reaction uridine(55) in tRNA = pseudouridine(55) in tRNA. Functionally, responsible for synthesis of pseudouridine from uracil-55 in the psi GC loop of transfer RNAs. The polypeptide is tRNA pseudouridine synthase B (Chromohalobacter salexigens (strain ATCC BAA-138 / DSM 3043 / CIP 106854 / NCIMB 13768 / 1H11)).